Here is a 613-residue protein sequence, read N- to C-terminus: Pentatricopeptide repeat-containing protein At2g45350, chloroplastic (613 aa).

13 PPR repeats span residues 85–119, 120–154, 155–185, 186–216, 219–250, 251–285, 286–312, 313–347, 349–383, 384–414, 415–449, 450–480, and 486–516; these read DPFLWNAVIKSHSHGKDPRQALLLLCLMLENGVSV, DKFSLSLVLKACSRLGFVKGGMQIHGFLKKTGLWS, DLFLQNCLIGLYLKCGCLGLSRQMFDRMPKR, DSVSYNSMIDGYVKCGLIVSARELFDLMPME, NLISWNSMISGYAQTSDGVDIASKLFADMPEK, DLISWNSMIDGYVKHGRIEDAKGLFDVMPRRDVVT, WATMIDGYAKLGFVHHAKTLFDQMPHR, DVVAYNSMMAGYVQNKYHMEALEIFSDMEKESHLL, DDTTLVIVLPAIAQLGRLSKAIDMHLYIVEKQFYL, GGKLGVALIDMYSKCGSIQHAMLVFEGIENK, SIDHWNAMIGGLAIHGLGESAFDMLLQIERLSLKP, DDITFVGVLNACSHSGLVKEGLLCFELMRRK, and RLQHYGCMVDILSRSGSIELAKNLIEEMPVE. The segment at 521–596 is type E motif; that stretch reads IWRTFLTACS…IPGCSWIELD (76 aa).

The protein belongs to the PPR family. PCMP-E subfamily. In terms of assembly, interacts with DYW1.

Its subcellular location is the plastid. The protein localises to the chloroplast. Its function is as follows. Plays a major role in chloroplast RNA editing. Acts as a site-recognition transacting factor to recruit C-deaminase. Involved in single RNA editing events. Required for the edition of the site 1 of ndhD (ndhD-1 site corresponding to cytidine-2), which is a plastid-encoded subunit of the NADH-plastoquinone oxidoreductase. The interaction with DYW1 is required for its function in editing the ndhD-1 site. In Arabidopsis thaliana (Mouse-ear cress), this protein is Pentatricopeptide repeat-containing protein At2g45350, chloroplastic (CRR4).